The following is an 851-amino-acid chain: DNA mismatch repair protein MutS (851 aa).

Position 602–609 (602–609) interacts with ATP; that stretch reads GPNMSGKS.

Belongs to the DNA mismatch repair MutS family.

In terms of biological role, this protein is involved in the repair of mismatches in DNA. It is possible that it carries out the mismatch recognition step. This protein has a weak ATPase activity. This Streptococcus pyogenes serotype M2 (strain MGAS10270) protein is DNA mismatch repair protein MutS.